The following is a 570-amino-acid chain: MIPPEIRRSVLLQKAIKLALAGTLLTFASFSATAADPSSDTETPQPPDILLGPLFNDVQNAKLFPDQKTFADAIPNSDPLMILADYRMQRNQSGFDLRHFVDVNFTLPKAGEKYVPPAGQSLREHIDGLWPVLTRSTKNVEKWDSLLPLPESYVVPGGRFREIYYWDSYFTMLGLAESGHWDKVADMVANFGYEIDAWGHIPNGNRTYYLSRSQPPFFAFMVELLAQHEGDDALKEYLPQLQKEYAYWMEGVETLQPGQQNQRVVKLEDGSVLNRYWDDRDTPRPESWVEDIATAKSNPNRPATEIYRDLRSAAASGWDFSSRWMDNPQQLSTIRTTTIAPVDLNALLYQLEKTLARASAAAGDRAKASHYDALANARQKAIEMHLWNNKEGWYADYDLKNNKIRDQLTAAALFPLYVNAAAKDRAAKVAAAAQAHLLQPGGLATTSVKSGQQWDAPNGWAPLQWVAAEGLQNYGQDDVAMEVTWRFLTNVQHTYDREKKLVEKNDVSSTGTGGGGGEYPLQDGFGWTNGVTLKMLDLICPQEKPCDSVPSTRPASLSATPTKTPSAATQ.

The first 34 residues, 1–34, serve as a signal peptide directing secretion; that stretch reads MIPPEIRRSVLLQKAIKLALAGTLLTFASFSATA. Substrate contacts are provided by residues Arg159, 166 to 167, Asn203, 212 to 214, 284 to 286, and Gly317; these read WD, RSQ, and RPE. Catalysis depends on proton donor/acceptor residues Asp319 and Glu503. Glu518 is a substrate binding site. Positions 544–570 are disordered; it reads KPCDSVPSTRPASLSATPTKTPSAATQ. Low complexity predominate over residues 554 to 570; the sequence is PASLSATPTKTPSAATQ.

This sequence belongs to the glycosyl hydrolase 37 family. As to quaternary structure, monomer.

The protein resides in the periplasm. The enzyme catalyses alpha,alpha-trehalose + H2O = alpha-D-glucose + beta-D-glucose. Provides the cells with the ability to utilize trehalose at high osmolarity by splitting it into glucose molecules that can subsequently be taken up by the phosphotransferase-mediated uptake system. The protein is Periplasmic trehalase of Salmonella typhimurium (strain LT2 / SGSC1412 / ATCC 700720).